The following is a 106-amino-acid chain: Cell division protein FtsB (106 aa).

The Cytoplasmic portion of the chain corresponds to 1–3; the sequence is MRL. A helical membrane pass occupies residues 4 to 21; sequence LTLIFVALIALLQYPLWL. Residues 22–106 are Periplasmic-facing; the sequence is GKGSWLRVWD…SPPAALTGAQ (85 aa). Residues 31 to 73 are a coiled coil; sequence DLNQKIVAQKAVNAELKLRNDTLDAEVRDLKQGNAAIEERARS.

Belongs to the FtsB family. In terms of assembly, part of a complex composed of FtsB, FtsL and FtsQ.

It localises to the cell inner membrane. Functionally, essential cell division protein. May link together the upstream cell division proteins, which are predominantly cytoplasmic, with the downstream cell division proteins, which are predominantly periplasmic. The chain is Cell division protein FtsB from Methylobacillus flagellatus (strain ATCC 51484 / DSM 6875 / VKM B-1610 / KT).